The following is a 927-amino-acid chain: SPX and EXS domain-containing protein 5 (927 aa).

In terms of domain architecture, SPX spans 1–460 (MKFGKYLESQ…GLSIGSQVMS (460 aa)). Disordered regions lie at residues 54–78 (KINSKQPSPTTATATTTTIGISSSN), 204–239 (KKNKLNNNNNNNNNNNNNNNNTTSPPPLSHDQQHLQ), 257–305 (PIKS…DQDP), and 326–355 (SDNCNDNGASDEFNGSVNNNGAGSGGGGNN). Low complexity-rich tracts occupy residues 60–78 (PSPTTATATTTTIGISSSN) and 208–224 (LNNNNNNNNNNNNNNNN). Over residues 257 to 270 (PIKSTPLSPKQQDG) the composition is skewed to polar residues. Residues 286-299 (LEEEEEEEEEEDDN) are compositionally biased toward acidic residues. A run of 8 helical transmembrane segments spans residues 516-536 (FFSGVCAGWTSALLMLIYYFI), 553-573 (VYSAFGLVLLWAFIFGIDCWV), 597-617 (IFQAVTLLSVMWITSIGVYMW), 636-656 (PLVLFGAYMLILVCPFNIFQL), 682-702 (FFMGDQLSSLVLMIVQFAQFV), 769-789 (LSIVVVVCSTLDGFFSGDSGW), 845-862 (FVYYFAIFSNLGFRTTWT), and 869-889 (QLTNILPSYKLVVVIGIIEIL). Residues 717-927 (GCIRYARYFN…LPYQIRDNEN (211 aa)) enclose the EXS domain.

Belongs to the SYG1 (TC 2.A.94) family.

It localises to the membrane. This Dictyostelium discoideum (Social amoeba) protein is SPX and EXS domain-containing protein 5.